The following is a 128-amino-acid chain: Phycoerythrin alpha-3 chain, chloroplastic (128 aa).

Residues 1–52 (MFAKTLASLAVIGSAAAYVPMMSMDMGRREVVQAGAAAAAVTPFLSGAPAGA) constitute a chloroplast transit peptide. 5-hydroxylysine is present on K56. The disordered stretch occupies residues 70–89 (GCSRAPKESTGGKAGGQDDE). 15,16-dihydrobiliverdin is bound by residues C71, R73, 77–78 (ES), and K93.

Belongs to the phycoerythrin family. In terms of assembly, heterotetramer of 2 different alpha chains and 2 identical beta chains. The subunit composition could comprise of any combination of 2 out of 4 different alpha units with an invariant beta unit. Post-translationally, contains one covalently linked 15,16-dihydrobiliverdin chromophore.

It localises to the plastid. Its subcellular location is the chloroplast thylakoid membrane. Its function is as follows. Light-harvesting photosynthetic tetrapyrrole chromophore-protein from the phycobiliprotein complex. This Rhodomonas sp. (strain CS 24) (Chroomonas sp. (strain CS24)) protein is Phycoerythrin alpha-3 chain, chloroplastic (cpeA3).